A 704-amino-acid polypeptide reads, in one-letter code: Phosphate acetyltransferase (704 aa).

The segment at 379–704 (AFRYQVVQRA…AIQADAQAPA (326 aa)) is phosphate acetyltransferase.

In the N-terminal section; belongs to the CobB/CobQ family. It in the C-terminal section; belongs to the phosphate acetyltransferase and butyryltransferase family. As to quaternary structure, homohexamer.

Its subcellular location is the cytoplasm. The catalysed reaction is acetyl-CoA + phosphate = acetyl phosphate + CoA. It functions in the pathway metabolic intermediate biosynthesis; acetyl-CoA biosynthesis; acetyl-CoA from acetate: step 2/2. Activity is increased under anaerobic growth conditions. Its function is as follows. Involved in acetate metabolism. In combination with LdhA and AckA, allows fermentation of pyruvate, enhancing long-term survival under anaerobic conditions. The sequence is that of Phosphate acetyltransferase (pta) from Pseudomonas aeruginosa (strain ATCC 15692 / DSM 22644 / CIP 104116 / JCM 14847 / LMG 12228 / 1C / PRS 101 / PAO1).